The sequence spans 450 residues: Phosphoglucosamine mutase (450 aa).

Ser-102 functions as the Phosphoserine intermediate in the catalytic mechanism. Mg(2+) is bound by residues Ser-102, Asp-243, Asp-245, and Asp-247. Ser-102 bears the Phosphoserine mark.

Belongs to the phosphohexose mutase family. Requires Mg(2+) as cofactor. In terms of processing, activated by phosphorylation.

The catalysed reaction is alpha-D-glucosamine 1-phosphate = D-glucosamine 6-phosphate. Catalyzes the conversion of glucosamine-6-phosphate to glucosamine-1-phosphate. This chain is Phosphoglucosamine mutase, found in Agrobacterium fabrum (strain C58 / ATCC 33970) (Agrobacterium tumefaciens (strain C58)).